The chain runs to 679 residues: Sodium-dependent phosphate transporter 1 (679 aa).

A run of 6 helical transmembrane segments spans residues 21–41 (YLWMLILGFIIAFVLAFSVGA), 62–82 (ACILASIFETVGSVLLGAKVS), 100–120 (GLLMAGSVSAMFGSAVWQLVA), 158–178 (IVMSWFVSPLLSGIMSGILFF), 203–223 (ACTVGINLFSIMYTGAPLLGF), and 230–250 (GTILISVGCAVFCALIVWFFV). A phosphoserine mark is found at Ser-265 and Ser-269. 4 helical membrane passes run 511 to 531 (VSLLFQFLQILTACFGSFAHG), 558 to 578 (VATPIWLLLYGGVGICVGLWV), 600 to 620 (FSIELASALTVVIASNIGLPI), and 650 to 670 (IFMAWFVTVPISGVISAAIMA). The segment at 550–558 (DTGDVSSKV) is a.

The protein belongs to the inorganic phosphate transporter (PiT) (TC 2.A.20) family. In terms of tissue distribution, ubiquitously expressed.

It is found in the cell membrane. The enzyme catalyses 2 Na(+)(out) + phosphate(out) = 2 Na(+)(in) + phosphate(in). Its function is as follows. Sodium-phosphate symporter which preferentially transports the monovalent form of phosphate with a stoichiometry of two sodium ions per phosphate ion. May play a role in extracellular matrix and cartilage calcification as well as in vascular calcification. Essential for cell proliferation but this function is independent of its phosphate transporter activity. In terms of biological role, (Microbial infection) May function as a retroviral receptor as it confers human cells susceptibility to infection to Gibbon Ape Leukemia Virus (GaLV), Simian sarcoma-associated virus (SSAV) and Feline leukemia virus subgroup B (FeLV-B) as well as 10A1 murine leukemia virus (10A1 MLV). The chain is Sodium-dependent phosphate transporter 1 (SLC20A1) from Homo sapiens (Human).